The sequence spans 371 residues: Probable L-aspartate decarboxylase (371 aa).

K232 carries the N6-(pyridoxal phosphate)lysine modification.

The protein belongs to the group II decarboxylase family. MfnA subfamily. It depends on pyridoxal 5'-phosphate as a cofactor.

The enzyme catalyses L-aspartate + H(+) = beta-alanine + CO2. It functions in the pathway cofactor biosynthesis; coenzyme A biosynthesis. In terms of biological role, catalyzes the decarboxylation of L-aspartate to produce beta-alanine. This is Probable L-aspartate decarboxylase from Pyrococcus furiosus (strain ATCC 43587 / DSM 3638 / JCM 8422 / Vc1).